A 383-amino-acid polypeptide reads, in one-letter code: Plant intracellular Ras-group-related LRR protein 8 (383 aa).

10 LRR repeats span residues 56-79 (RQNI…SINL), 80-102 (ASIS…LVAR), 104-126 (LNLW…IGCL), 127-149 (SKLK…IEDC), 151-173 (SLEE…GFEL), 174-197 (TNLT…SYLT), 199-219 (LRVL…LENL), 221-244 (NLQV…VGLL), 245-268 (ISLV…GCLR), and 270-290 (IQKL…VVEQ). The GVYW; degenerate signature appears at 291–298 (GLEALKQY).

The protein belongs to the SHOC2 family. As to expression, widely expressed except flowers.

Its function is as follows. Leucine-rich repeat protein that likely mediates protein interactions, possibly in the context of signal transduction. The protein is Plant intracellular Ras-group-related LRR protein 8 (PIRL8) of Arabidopsis thaliana (Mouse-ear cress).